The sequence spans 199 residues: GTP-binding protein Di-Ras2 (199 aa).

GTP is bound by residues 14–21 (GAGGVGKS), 33–39 (RESYIPT), 61–65 (DTTGS), and 121–124 (NKCD). Serine 35 is modified (phosphoserine). Residues 36 to 44 (YIPTVEDTY) carry the Effector region motif. Residue serine 126 is modified to Phosphoserine. A GTP-binding site is contributed by 152 to 153 (AK). At cysteine 196 the chain carries Cysteine methyl ester. Cysteine 196 carries S-geranylgeranyl cysteine lipidation. The propeptide at 197–199 (VIM) is removed in mature form.

It belongs to the small GTPase superfamily. Di-Ras family. Ubiquitinated by the ECS(ASB11) complex via 'Lys-11'-linked ubiquitin chains, leading to its degradation by the proteasome.

The protein resides in the cell membrane. It carries out the reaction GTP + H2O = GDP + phosphate + H(+). Functionally, displays low GTPase activity and exists predominantly in the GTP-bound form. The polypeptide is GTP-binding protein Di-Ras2 (DIRAS2) (Pongo abelii (Sumatran orangutan)).